Reading from the N-terminus, the 316-residue chain is Bifunctional peptidase and (3S)-lysyl hydroxylase Jmjd7 (316 aa).

One can recognise a JmjC domain in the interval 128-307 (VQKQCSNLPT…LKYSYFQLMD (180 aa)). His178, Asp180, and His277 together coordinate Fe cation.

In terms of assembly, homodimer; disulfide-linked. Interacts with DRG1 and DRG2. Fe(2+) is required as a cofactor.

It is found in the nucleus. The protein resides in the cytoplasm. It catalyses the reaction L-lysyl-[protein] + 2-oxoglutarate + O2 = (3S)-3-hydroxy-L-lysyl-[protein] + succinate + CO2. Functionally, bifunctional enzyme that acts both as an endopeptidase and 2-oxoglutarate-dependent monooxygenase. Endopeptidase that cleaves histones N-terminal tails at the carboxyl side of methylated arginine or lysine residues, to generate 'tailless nucleosomes', which may trigger transcription elongation. Preferentially recognizes and cleaves monomethylated and dimethylated arginine residues of histones H2, H3 and H4. After initial cleavage, continues to digest histones tails via its aminopeptidase activity. Additionally, may play a role in protein biosynthesis by modifying the translation machinery. Acts as a Fe(2+) and 2-oxoglutarate-dependent monooxygenase, catalyzing (S)-stereospecific hydroxylation at C-3 of 'Lys-22' of DRG1 and 'Lys-21' of DRG2 translation factors (TRAFAC), promoting their interaction with ribonucleic acids (RNA). This Mus musculus (Mouse) protein is Bifunctional peptidase and (3S)-lysyl hydroxylase Jmjd7.